A 98-amino-acid chain; its full sequence is Small ribosomal subunit protein bS18c (98 aa).

Basic and acidic residues predominate over residues 1 to 13; that stretch reads MSKQSFDFKRYKP. Residues 1–26 form a disordered region; sequence MSKQSFDFKRYKPEAPSGSRKRPLKK.

It belongs to the bacterial ribosomal protein bS18 family. Part of the 30S ribosomal subunit.

It localises to the plastid. The protein resides in the chloroplast. The polypeptide is Small ribosomal subunit protein bS18c (Gnetum parvifolium (Small-leaved jointfir)).